We begin with the raw amino-acid sequence, 64 residues long: Large ribosomal subunit protein uL30 (64 aa).

Part of the 50S ribosomal subunit. The protein is methylated on either Ala-2 or Lys-3.

This Rhodopseudomonas palustris (strain ATCC BAA-98 / CGA009) protein is Large ribosomal subunit protein uL30.